The chain runs to 461 residues: L-seryl-tRNA(Sec) selenium transferase (461 aa).

At lysine 294 the chain carries N6-(pyridoxal phosphate)lysine.

It belongs to the SelA family. It depends on pyridoxal 5'-phosphate as a cofactor.

The protein localises to the cytoplasm. It carries out the reaction L-seryl-tRNA(Sec) + selenophosphate + H(+) = L-selenocysteinyl-tRNA(Sec) + phosphate. The protein operates within aminoacyl-tRNA biosynthesis; selenocysteinyl-tRNA(Sec) biosynthesis; selenocysteinyl-tRNA(Sec) from L-seryl-tRNA(Sec) (bacterial route): step 1/1. Its function is as follows. Converts seryl-tRNA(Sec) to selenocysteinyl-tRNA(Sec) required for selenoprotein biosynthesis. The protein is L-seryl-tRNA(Sec) selenium transferase of Actinobacillus pleuropneumoniae serotype 5b (strain L20).